A 178-amino-acid chain; its full sequence is Large ribosomal subunit protein uL6 (178 aa).

This sequence belongs to the universal ribosomal protein uL6 family. In terms of assembly, part of the 50S ribosomal subunit.

Functionally, this protein binds to the 23S rRNA, and is important in its secondary structure. It is located near the subunit interface in the base of the L7/L12 stalk, and near the tRNA binding site of the peptidyltransferase center. The chain is Large ribosomal subunit protein uL6 from Opitutus terrae (strain DSM 11246 / JCM 15787 / PB90-1).